The chain runs to 199 residues: NAD(P)H dehydrogenase (quinone) (199 aa).

The region spanning 4–190 is the Flavodoxin-like domain; it reads VLVLYYSAYG…NGARYQGRTI (187 aa). FMN-binding positions include 10 to 15 and 78 to 80; these read SAYGHI and TRF. Y12 serves as a coordination point for NAD(+). W98 provides a ligand contact to substrate. Residues 113-119 and H134 each bind FMN; that span reads STATQHG.

It belongs to the WrbA family. FMN serves as cofactor.

The catalysed reaction is a quinone + NADH + H(+) = a quinol + NAD(+). It catalyses the reaction a quinone + NADPH + H(+) = a quinol + NADP(+). The polypeptide is NAD(P)H dehydrogenase (quinone) (Afipia carboxidovorans (strain ATCC 49405 / DSM 1227 / KCTC 32145 / OM5) (Oligotropha carboxidovorans)).